Consider the following 339-residue polypeptide: MFYKIAQKVMFQMDPERAHNLAIGSLKMTGNSPLNCFYRQTIAPAPVTFMGLTFPNPVGLAAGMDKDGESIDAFHAMGFGHIEVGTVTPRPQPGNDLPRLFRLKPAKGIINRMGFNNKGVDNLVRNLIAKKSDIMVGVNIGKNKDTPVEQGKDDYLICMDKVYPYAAYIAVNISSPNTPGLRSLQYGDLLDELLSAIKTKQLELAEKHKKYVPIALKIAPDLTIEEIENIADALIKNKFDGAIATNTTLTRDGVSGLANANESGGLSGKPLTELSTKVIRQLAACLKGQIPIIGVGGINSAEDALAKFDAGATMVQIYSGFIYQGPKLIKEIVEAYRLK.

FMN is bound by residues 62–66 (AGMDK) and threonine 86. Lysine 66 is a binding site for substrate. Residue 111–115 (NRMGF) coordinates substrate. Asparagine 139 and asparagine 172 together coordinate FMN. Substrate is bound at residue asparagine 172. The active-site Nucleophile is serine 175. Asparagine 177 is a binding site for substrate. 2 residues coordinate FMN: lysine 217 and threonine 245. 246-247 (NT) contributes to the substrate binding site. FMN contacts are provided by residues glycine 268, glycine 297, and 318–319 (YS).

Belongs to the dihydroorotate dehydrogenase family. Type 2 subfamily. In terms of assembly, monomer. The cofactor is FMN.

The protein localises to the cell membrane. It catalyses the reaction (S)-dihydroorotate + a quinone = orotate + a quinol. It functions in the pathway pyrimidine metabolism; UMP biosynthesis via de novo pathway; orotate from (S)-dihydroorotate (quinone route): step 1/1. Functionally, catalyzes the conversion of dihydroorotate to orotate with quinone as electron acceptor. The polypeptide is Dihydroorotate dehydrogenase (quinone) (Shewanella putrefaciens (strain CN-32 / ATCC BAA-453)).